A 141-amino-acid chain; its full sequence is Elongation factor G, chloroplastic (141 aa).

A tr-type G domain is found at 12–141 (KDYRNIGIMA…VPRICFVNKM (130 aa)). GTP-binding positions include 21 to 28 (AHIDAGKT) and 85 to 89 (DTPGH).

Belongs to the TRAFAC class translation factor GTPase superfamily. Classic translation factor GTPase family. EF-G/EF-2 subfamily.

It is found in the plastid. The protein resides in the chloroplast. It participates in protein biosynthesis; polypeptide chain elongation. Functionally, chloroplast-localized elongation factor EF-G involved in protein synthesis in plastids. Catalyzes the GTP-dependent ribosomal translocation step during translation elongation. During this step, the ribosome changes from the pre-translocational (PRE) to the post-translocational (POST) state as the newly formed A-site-bound peptidyl-tRNA and P-site-bound deacylated tRNA move to the P and E sites, respectively. Catalyzes the coordinated movement of the two tRNA molecules, the mRNA and conformational changes in the ribosome. The protein is Elongation factor G, chloroplastic (fusA) of Pisum sativum (Garden pea).